Reading from the N-terminus, the 254-residue chain is 14-3-3-like protein RA215 (254 aa).

The protein belongs to the 14-3-3 family.

The chain is 14-3-3-like protein RA215 from Solanum tuberosum (Potato).